A 103-amino-acid chain; its full sequence is Alkanal monooxygenase alpha chain (103 aa).

In terms of assembly, heterodimer of an alpha and a beta chain.

The catalysed reaction is a long-chain fatty aldehyde + FMNH2 + O2 = a long-chain fatty acid + hnu + FMN + H2O + 2 H(+). Functionally, light-emitting reaction in luminous bacteria. The chain is Alkanal monooxygenase alpha chain (luxA) from Vibrio cholerae.